The primary structure comprises 175 residues: Riboflavin kinase (175 aa).

54 to 59 (GLGEGK) lines the CDP pocket. Mg(2+)-binding residues include Thr-83 and Asn-85. Thr-142 and Glu-150 together coordinate FMN. 155 to 158 (FHLR) provides a ligand contact to CDP.

It belongs to the archaeal riboflavin kinase family. The cofactor is Mg(2+).

The catalysed reaction is riboflavin + CTP = CDP + FMN + H(+). The protein operates within cofactor biosynthesis; FMN biosynthesis; FMN from riboflavin (CTP route): step 1/1. Catalyzes the CTP-dependent phosphorylation of riboflavin (vitamin B2) to form flavin mononucleotide (FMN). The protein is Riboflavin kinase of Saccharolobus solfataricus (strain ATCC 35092 / DSM 1617 / JCM 11322 / P2) (Sulfolobus solfataricus).